The primary structure comprises 742 residues: Phosphoribosylformylglycinamidine synthase subunit PurL (742 aa).

Histidine 50 is an active-site residue. Tyrosine 53 and lysine 92 together coordinate ATP. Glutamate 94 lines the Mg(2+) pocket. Substrate is bound by residues 95–98 (SHNH) and arginine 117. Histidine 96 functions as the Proton acceptor in the catalytic mechanism. Aspartate 118 is a binding site for Mg(2+). Residue glutamine 241 participates in substrate binding. Position 269 (aspartate 269) interacts with Mg(2+). 313–315 (ESQ) lines the substrate pocket. ATP is bound by residues aspartate 494 and glycine 531. Asparagine 532 is a Mg(2+) binding site. Serine 534 contributes to the substrate binding site.

The protein belongs to the FGAMS family. In terms of assembly, monomer. Part of the FGAM synthase complex composed of 1 PurL, 1 PurQ and 2 PurS subunits.

Its subcellular location is the cytoplasm. The enzyme catalyses N(2)-formyl-N(1)-(5-phospho-beta-D-ribosyl)glycinamide + L-glutamine + ATP + H2O = 2-formamido-N(1)-(5-O-phospho-beta-D-ribosyl)acetamidine + L-glutamate + ADP + phosphate + H(+). The protein operates within purine metabolism; IMP biosynthesis via de novo pathway; 5-amino-1-(5-phospho-D-ribosyl)imidazole from N(2)-formyl-N(1)-(5-phospho-D-ribosyl)glycinamide: step 1/2. Part of the phosphoribosylformylglycinamidine synthase complex involved in the purines biosynthetic pathway. Catalyzes the ATP-dependent conversion of formylglycinamide ribonucleotide (FGAR) and glutamine to yield formylglycinamidine ribonucleotide (FGAM) and glutamate. The FGAM synthase complex is composed of three subunits. PurQ produces an ammonia molecule by converting glutamine to glutamate. PurL transfers the ammonia molecule to FGAR to form FGAM in an ATP-dependent manner. PurS interacts with PurQ and PurL and is thought to assist in the transfer of the ammonia molecule from PurQ to PurL. This Sinorhizobium fredii (strain NBRC 101917 / NGR234) protein is Phosphoribosylformylglycinamidine synthase subunit PurL.